The primary structure comprises 123 residues: Antitoxin RnlB (123 aa).

Can form a complex with cognate toxin RnlA. Probably degraded by CplXP and Lon proteases.

Its function is as follows. Antitoxin component of a type II toxin-antitoxin (TA) system. A labile antitoxin (half-life of 2.1 minutes) that inhibits the endonuclease activity of cognate toxin RnlA but not that of non-cognate toxin LsoA. This Escherichia coli (strain K12) protein is Antitoxin RnlB (rnlB).